Here is a 248-residue protein sequence, read N- to C-terminus: Sugar fermentation stimulation protein homolog (248 aa).

Belongs to the SfsA family.

The chain is Sugar fermentation stimulation protein homolog from Methylorubrum extorquens (strain CM4 / NCIMB 13688) (Methylobacterium extorquens).